The chain runs to 267 residues: Undecaprenyl-diphosphatase (267 aa).

7 helical membrane-spanning segments follow: residues 39-59 (QGLA…ILYF), 87-107 (WMIA…KDFI), 111-131 (LRSA…LWWV), 149-169 (ALFI…RSGA), 189-209 (FLMS…KLVT), 218-238 (ALSI…HAFL), and 244-264 (VGMM…IAFL).

It belongs to the UppP family.

The protein resides in the cell inner membrane. The enzyme catalyses di-trans,octa-cis-undecaprenyl diphosphate + H2O = di-trans,octa-cis-undecaprenyl phosphate + phosphate + H(+). In terms of biological role, catalyzes the dephosphorylation of undecaprenyl diphosphate (UPP). Confers resistance to bacitracin. The protein is Undecaprenyl-diphosphatase of Photobacterium profundum (strain SS9).